Reading from the N-terminus, the 252-residue chain is 3-deoxy-manno-octulosonate cytidylyltransferase (252 aa).

Belongs to the KdsB family.

The protein localises to the cytoplasm. The enzyme catalyses 3-deoxy-alpha-D-manno-oct-2-ulosonate + CTP = CMP-3-deoxy-beta-D-manno-octulosonate + diphosphate. Its pathway is nucleotide-sugar biosynthesis; CMP-3-deoxy-D-manno-octulosonate biosynthesis; CMP-3-deoxy-D-manno-octulosonate from 3-deoxy-D-manno-octulosonate and CTP: step 1/1. It functions in the pathway bacterial outer membrane biogenesis; lipopolysaccharide biosynthesis. In terms of biological role, activates KDO (a required 8-carbon sugar) for incorporation into bacterial lipopolysaccharide in Gram-negative bacteria. This chain is 3-deoxy-manno-octulosonate cytidylyltransferase, found in Vibrio campbellii (strain ATCC BAA-1116).